The primary structure comprises 1014 residues: UvrABC system protein A (1014 aa).

32–39 lines the ATP pocket; that stretch reads GLSGSGKS. ABC transporter domains follow at residues 314 to 592 and 612 to 941; these read WSHG…AESQ and QDPS…KFLR. 645–652 is a binding site for ATP; that stretch reads GVSGSGKS. Residues 744 to 770 form a C4-type zinc finger; sequence CENCAGDGTIKIEMNFLPDVYVPCEVC. Low complexity predominate over residues 976–995; the sequence is TKTVTGTAAKKATATRTAKT. Positions 976-1014 are disordered; it reads TKTVTGTAAKKATATRTAKTAVKKAAKPAAKKTTRTSKA. Residues 996-1014 show a composition bias toward basic residues; the sequence is AVKKAAKPAAKKTTRTSKA.

Belongs to the ABC transporter superfamily. UvrA family. In terms of assembly, forms a heterotetramer with UvrB during the search for lesions.

Its subcellular location is the cytoplasm. In terms of biological role, the UvrABC repair system catalyzes the recognition and processing of DNA lesions. UvrA is an ATPase and a DNA-binding protein. A damage recognition complex composed of 2 UvrA and 2 UvrB subunits scans DNA for abnormalities. When the presence of a lesion has been verified by UvrB, the UvrA molecules dissociate. This Streptomyces coelicolor (strain ATCC BAA-471 / A3(2) / M145) protein is UvrABC system protein A.